A 405-amino-acid chain; its full sequence is Serine-type anaerobic sulfatase-maturating enzyme (405 aa).

Residues 18 to 249 (PRSPVPFHIL…QWRKRCDRGR (232 aa)) enclose the Radical SAM core domain. Residues cysteine 35 and cysteine 39 each coordinate [4Fe-4S] cluster. An S-adenosyl-L-methionine-binding site is contributed by tyrosine 41. Cysteine 42 contacts [4Fe-4S] cluster. 3 residues coordinate S-adenosyl-L-methionine: glycine 84, serine 140, and arginine 152. The [4Fe-4S] cluster site is built by cysteine 270, cysteine 276, and cysteine 291. Aspartate 292 acts as the Proton acceptor in catalysis. Cysteine 331, cysteine 334, cysteine 340, cysteine 344, and cysteine 357 together coordinate [4Fe-4S] cluster.

The protein belongs to the radical SAM superfamily. Anaerobic sulfatase-maturating enzyme family. In terms of assembly, monomer. Interacts with AtsA prior to its export to the periplasm. [4Fe-4S] cluster is required as a cofactor.

It is found in the cytoplasm. The enzyme catalyses L-seryl-[sulfatase] + S-adenosyl-L-methionine = 3-oxo-L-alanyl-[sulfatase] + 5'-deoxyadenosine + L-methionine + H(+). Its pathway is protein modification; sulfatase oxidation. In terms of biological role, involved in 'Ser-type' sulfatase maturation under anaerobic conditions. Catalyzes the post-translational modification of serine ('Ser-72' in the arylsulfatase AtsA) into 3-oxoalanine (also known as C(alpha)-formylglycine (FGly)), by a free radical chemical mechanism initiated via the reductive cleavage of S-adenosyl-L-methionine (SAM). The chain is Serine-type anaerobic sulfatase-maturating enzyme from Klebsiella aerogenes (Enterobacter aerogenes).